Reading from the N-terminus, the 263-residue chain is Type III pantothenate kinase (263 aa).

14–21 is a binding site for ATP; that stretch reads DIGNTSVN. 115–118 contacts substrate; that stretch reads GADR. The active-site Proton acceptor is D117. D137 is a K(+) binding site. Residue T140 coordinates ATP. T192 provides a ligand contact to substrate.

It belongs to the type III pantothenate kinase family. In terms of assembly, homodimer. NH4(+) serves as cofactor. K(+) is required as a cofactor.

It is found in the cytoplasm. The catalysed reaction is (R)-pantothenate + ATP = (R)-4'-phosphopantothenate + ADP + H(+). It functions in the pathway cofactor biosynthesis; coenzyme A biosynthesis; CoA from (R)-pantothenate: step 1/5. Its function is as follows. Catalyzes the phosphorylation of pantothenate (Pan), the first step in CoA biosynthesis. This Dehalococcoides mccartyi (strain CBDB1) protein is Type III pantothenate kinase.